Reading from the N-terminus, the 113-residue chain is Putative pterin-4-alpha-carbinolamine dehydratase (113 aa).

It belongs to the pterin-4-alpha-carbinolamine dehydratase family.

It carries out the reaction (4aS,6R)-4a-hydroxy-L-erythro-5,6,7,8-tetrahydrobiopterin = (6R)-L-erythro-6,7-dihydrobiopterin + H2O. The sequence is that of Putative pterin-4-alpha-carbinolamine dehydratase from Legionella pneumophila (strain Lens).